The primary structure comprises 1348 residues: Putative late blight resistance protein homolog R1B-12 (1348 aa).

Coiled coils occupy residues 446–469 (RYSD…ESLQ) and 561–583 (PRMN…KLLN). Positions 552-848 (RTSSQLTRTP…ISESFIKSCE (297 aa)) constitute an NB-ARC domain. Position 595-602 (595-602 (GMPGLGKT)) interacts with ATP. 8 LRR repeats span residues 977-1001 (FKFL…LLYL), 1051-1074 (LRHL…SAKL), 1123-1147 (PITL…ISAQ), 1151-1170 (YLKL…TADH), 1171-1194 (LKHL…EVSN), 1197-1219 (FPQL…ADDA), 1220-1244 (FPNL…FMDI), and 1309-1332 (LPGI…DMDA). Positions 1284–1348 (VKKMVLKFDT…VGKLINRGML (65 aa)) constitute an HMA domain.

Belongs to the disease resistance NB-LRR family.

The protein resides in the cytoplasm. Its subcellular location is the membrane. Confers resistance to late blight (Phytophthora infestans) races carrying the avirulence gene Avr1. Resistance proteins guard the plant against pathogens that contain an appropriate avirulence protein via an indirect interaction with this avirulence protein. That triggers a defense system including the hypersensitive response, which restricts the pathogen growth. The sequence is that of Putative late blight resistance protein homolog R1B-12 (R1B-12) from Solanum demissum (Wild potato).